Here is a 77-residue protein sequence, read N- to C-terminus: Translation initiation factor IF-1, chloroplastic (77 aa).

Residues 1–71 (MKEQKLIHEG…TRGRIIYRLR (71 aa)) form the S1-like domain.

This sequence belongs to the IF-1 family. Component of the 30S ribosomal translation pre-initiation complex which assembles on the 30S ribosome in the order IF-2 and IF-3, IF-1 and N-formylmethionyl-tRNA(fMet); mRNA recruitment can occur at any time during PIC assembly.

Its subcellular location is the plastid. It is found in the chloroplast. One of the essential components for the initiation of protein synthesis. Stabilizes the binding of IF-2 and IF-3 on the 30S subunit to which N-formylmethionyl-tRNA(fMet) subsequently binds. Helps modulate mRNA selection, yielding the 30S pre-initiation complex (PIC). Upon addition of the 50S ribosomal subunit IF-1, IF-2 and IF-3 are released leaving the mature 70S translation initiation complex. The sequence is that of Translation initiation factor IF-1, chloroplastic from Phalaenopsis aphrodite subsp. formosana (Moth orchid).